We begin with the raw amino-acid sequence, 199 residues long: Hematopoietic prostaglandin D synthase (199 aa).

The region spanning 2–79 (PNYKLLYFNM…YLTKNTDLAG (78 aa)) is the GST N-terminal domain. Glutathione is bound by residues Y8, R14, W39, 49–51 (GKI), and 63–64 (QS). The 119-residue stretch at 81–199 (TELEQCQVDA…WILKRPQTKL (119 aa)) folds into the GST C-terminal domain.

It belongs to the GST superfamily. Sigma family. In terms of assembly, homodimer. Requires glutathione as cofactor. In terms of tissue distribution, highly expressed in spleen and bone marrow. Lower levels of expression in small intestine, colon, liver, pancreas and skin. Not detected in brain, heart, lung or kidney (at protein level).

Its subcellular location is the cytoplasm. It carries out the reaction prostaglandin H2 = prostaglandin D2. The catalysed reaction is RX + glutathione = an S-substituted glutathione + a halide anion + H(+). It catalyses the reaction 2-glyceryl-prostaglandin H2 = 2-glyceryl-prostaglandin D2. Its function is as follows. Bifunctional enzyme which catalyzes both the conversion of PGH2 to PGD2, a prostaglandin involved in smooth muscle contraction/relaxation and a potent inhibitor of platelet aggregation, and the conjugation of glutathione with a wide range of aryl halides and organic isothiocyanates. Also exhibits low glutathione-peroxidase activity towards cumene hydroperoxide. This Rattus norvegicus (Rat) protein is Hematopoietic prostaglandin D synthase.